Here is a 246-residue protein sequence, read N- to C-terminus: Protein lin-37 homolog (246 aa).

At methionine 1 the chain carries N-acetylmethionine. Residues lysine 5 and lysine 7 each participate in a glycyl lysine isopeptide (Lys-Gly) (interchain with G-Cter in SUMO2) cross-link. Positions 39–55 are enriched in basic and acidic residues; it reads RLDEEAGKTPLDTHNKD. Disordered stretches follow at residues 39–90 and 129–208; these read RLDE…GGPQ and VRER…TLIY. Phosphoserine is present on residues serine 135 and serine 138. Position 167 is a phosphothreonine (threonine 167). 2 positions are modified to phosphoserine: serine 182 and serine 202.

In terms of assembly, component of the DREAM complex (also named LINC complex) at least composed of E2F4, E2F5, LIN9, LIN37, LIN52, LIN54, MYBL1, MYBL2, RBL1, RBL2, RBBP4, TFDP1 and TFDP2. The complex exists in quiescent cells where it represses cell cycle-dependent genes. It dissociates in S phase when LIN9, LIN37, LIN52 and LIN54 form a subcomplex that binds to MYBL2.

The polypeptide is Protein lin-37 homolog (Lin37) (Mus musculus (Mouse)).